The chain runs to 309 residues: MTRSFLDLADAGAAGVRLMLDEAVSRKKARAGLPKGAPDRDAPLAGHTLAMIFEKNSTRTRVSFDMAMRQLGGTTIVMDAGSMQLGRGETIADTARVLSRYVDAIMIRTDDHRKAVDLARYADVPVINGLTDRSHPCQIMADLQTILEHKGRVEGLGWAWLGDGNNVLHSIVEAGSLLGFPVRIGCPEGYDPDAEVLAEARARGGDILLSRDPAEVVRGADVVVTDTWISMGQAHAEEKLAAMMPFQVDEARMAQAAPDAAFLHCLPAHRGEEVVDAVIDGPHSLIWDEAENRLHAQKAVLLWCLGRLG.

Carbamoyl phosphate is bound by residues 57 to 60 (STRT), Q84, R108, and 135 to 138 (HPCQ). L-ornithine contacts are provided by residues N166, D226, and 230–231 (SM). Carbamoyl phosphate-binding positions include 265–266 (CL) and R293.

The protein belongs to the aspartate/ornithine carbamoyltransferase superfamily. OTCase family.

It localises to the cytoplasm. It carries out the reaction carbamoyl phosphate + L-ornithine = L-citrulline + phosphate + H(+). Its pathway is amino-acid biosynthesis; L-arginine biosynthesis; L-arginine from L-ornithine and carbamoyl phosphate: step 1/3. Its function is as follows. Reversibly catalyzes the transfer of the carbamoyl group from carbamoyl phosphate (CP) to the N(epsilon) atom of ornithine (ORN) to produce L-citrulline. The polypeptide is Ornithine carbamoyltransferase (Rhizorhabdus wittichii (strain DSM 6014 / CCUG 31198 / JCM 15750 / NBRC 105917 / EY 4224 / RW1) (Sphingomonas wittichii)).